The primary structure comprises 954 residues: MTTPTEFQFTDYQPYDFANRRHIGPSPAEMTDMLKVIGYNSLDGLIDGTLPPAIRQKAPLVWGAPMTEREALDKLRETANKNKVLVSLIGQGYHGTITPPVIQRNILENPAWYTAYTPYQPEISQGRLEALLNYQTMVCDLTGLDVANASLLDEATAAAEGMAIAERVAKSKAKAFFVDADCHPQTIALIRTRAEPLGWQVIVGNPFTDLDPVDVFGAIFQYPGTHGHINDFTGLIARLHQAGAISIVAADILALTLLKSPGEMGADIAVGSSQRFGVPVGYGGPHAAYMAVKDAIKRSMPGRLVGVSVDARGNRAYRLSLQTREQHIRREKATSNICTAQVLLAVMASMYAVFHGPKGIKAIAQQVHQKAVLMAKGLEKLGYKVEPESFFDTITVDVGHMQGLILRAAVAEGVNLRKVGDTHIGMSLDERTRPATLEAVWRAFGGNFKIADFEPSYRLPKGLLRTSDYLTHPIFHMNRAESEMTRYIRRLSDRDLALDRSMIPLGSCTMKLNATAEMLPITWPEFSDIHPFVPADQALGYREMIDDLIEKLCAVTGYDAFSMQPNSGAQGEYAGLLTIRNFHIANGEGHRDVCLIPTSAHGTNPASAQMVGMKVVVVKVRENGDIDLDDFRAKAEEHAANLSCCMITYPSTHGVFEETVKEICDLVHANGGQVYLDGANMNAMVGLSRPGDIGSDVSHLNLHKTFCIPHGGGGPGMGPIGVKAHLAPHLPGHPETDGRPGAVSAAAFGSASILPISWSYCLMMGGEGLTQATKVAILNANYIATRLKGAYDVLYKSKTGRVAHECIIDTRPLVDSAGVTVDDVAKRLIDCGFHAPTMSWPVAGTLMIEPTESETKAELDRFCEAMLAIREEARAIEDGRMDKVNNPLKNAPHTVEDLVGEWDRPYSREQACFPPGAFRVDKYWSPVNRVDNVYGDRNLICTCPPVESYAEAAE.

At lysine 704 the chain carries N6-(pyridoxal phosphate)lysine.

Belongs to the GcvP family. In terms of assembly, the glycine cleavage system is composed of four proteins: P, T, L and H. Requires pyridoxal 5'-phosphate as cofactor.

It catalyses the reaction N(6)-[(R)-lipoyl]-L-lysyl-[glycine-cleavage complex H protein] + glycine + H(+) = N(6)-[(R)-S(8)-aminomethyldihydrolipoyl]-L-lysyl-[glycine-cleavage complex H protein] + CO2. In terms of biological role, the glycine cleavage system catalyzes the degradation of glycine. The P protein binds the alpha-amino group of glycine through its pyridoxal phosphate cofactor; CO(2) is released and the remaining methylamine moiety is then transferred to the lipoamide cofactor of the H protein. In Rhizobium leguminosarum bv. trifolii (strain WSM2304), this protein is Glycine dehydrogenase (decarboxylating).